The primary structure comprises 38 residues: Photosystem II reaction center protein T (38 aa).

Residues 3–23 (ALVYTFLLVSTLGIIFFAIFF) form a helical membrane-spanning segment.

Belongs to the PsbT family. PSII is composed of 1 copy each of membrane proteins PsbA, PsbB, PsbC, PsbD, PsbE, PsbF, PsbH, PsbI, PsbJ, PsbK, PsbL, PsbM, PsbT, PsbY, PsbZ, Psb30/Ycf12, at least 3 peripheral proteins of the oxygen-evolving complex and a large number of cofactors. It forms dimeric complexes.

It is found in the plastid. Its subcellular location is the chloroplast thylakoid membrane. Functionally, found at the monomer-monomer interface of the photosystem II (PS II) dimer, plays a role in assembly and dimerization of PSII. PSII is a light-driven water plastoquinone oxidoreductase, using light energy to abstract electrons from H(2)O, generating a proton gradient subsequently used for ATP formation. This chain is Photosystem II reaction center protein T, found in Secale cereale (Rye).